Here is a 327-residue protein sequence, read N- to C-terminus: Delta(6)-protoilludene synthase HYPSUDRAFT_138665 (327 aa).

Residues Asp79, Asn215, Ser219, and Glu223 each coordinate Mg(2+). The DDXXD motif motif lies at 79–83; sequence DEHTD. Residues Arg304 and Tyr305 each contribute to the (2E,6E)-farnesyl diphosphate site.

It belongs to the terpene synthase family. It depends on Mg(2+) as a cofactor.

It carries out the reaction (2E,6E)-farnesyl diphosphate = Delta(6)-protoilludene + diphosphate. In terms of biological role, terpene cyclase that catalyzes the cyclization of farnesyl diphosphate (FPP) to delta(6)-protoilludene. The chain is Delta(6)-protoilludene synthase HYPSUDRAFT_138665 from Hypholoma sublateritium (strain FD-334 SS-4).